We begin with the raw amino-acid sequence, 460 residues long: Serine/threonine-protein kinase cds1 (460 aa).

Residues 60 to 116 enclose the FHA domain; it reads WRFGRHKSCEVVLNGPRVSNFHFEIYQGHRNDSDESENVVFLHDHSSNGTFLNFERL. The 267-residue stretch at 167 to 433 folds into the Protein kinase domain; that stretch reads YEIIRTLGSG…ESEALQHPWF (267 aa). ATP-binding positions include 173–181 and Lys-196; that span reads LGSGTFAVV. The Proton acceptor role is filled by Asp-294. Positions 438-453 are enriched in basic and acidic residues; it reads THEHRTPPSSSEHEAT. The disordered stretch occupies residues 438 to 460; it reads THEHRTPPSSSEHEATEQLNSSS. Thr-443 bears the Phosphothreonine mark.

Belongs to the protein kinase superfamily. CAMK Ser/Thr protein kinase family. CHEK2 subfamily. Interacts with rad26. Post-translationally, autophosphorylated.

It catalyses the reaction L-seryl-[protein] + ATP = O-phospho-L-seryl-[protein] + ADP + H(+). It carries out the reaction L-threonyl-[protein] + ATP = O-phospho-L-threonyl-[protein] + ADP + H(+). Functionally, has a role in the DNA replication-monitoring S/G2 checkpoint system. It is responsible for blocking mitosis in the S phase. It monitors DNA synthesis by interacting with DNA polymerase alpha and sends a signal to block the onset of mitosis while DNA synthesis is in progress. Phosphorylates rad60 and dna2. This chain is Serine/threonine-protein kinase cds1 (cds1), found in Schizosaccharomyces pombe (strain 972 / ATCC 24843) (Fission yeast).